An 86-amino-acid polypeptide reads, in one-letter code: Small ribosomal subunit protein uS17 (86 aa).

Belongs to the universal ribosomal protein uS17 family. As to quaternary structure, part of the 30S ribosomal subunit.

In terms of biological role, one of the primary rRNA binding proteins, it binds specifically to the 5'-end of 16S ribosomal RNA. This is Small ribosomal subunit protein uS17 from Exiguobacterium sp. (strain ATCC BAA-1283 / AT1b).